Reading from the N-terminus, the 468-residue chain is Probable protein phosphatase 2C 52 (468 aa).

The PPM-type phosphatase domain occupies 67–372; sequence SSCIFTQQGR…DDCAVVCLFL (306 aa). Mn(2+)-binding residues include Asp102, Gly103, Asp317, and Asp363. Residues 413–429 show a composition bias toward polar residues; it reads RSSSDQENETYGNVNTE. A disordered region spans residues 413 to 442; sequence RSSSDQENETYGNVNTETDAEDEKTVGDQN.

It belongs to the PP2C family. It depends on Mg(2+) as a cofactor. Mn(2+) serves as cofactor.

It catalyses the reaction O-phospho-L-seryl-[protein] + H2O = L-seryl-[protein] + phosphate. The catalysed reaction is O-phospho-L-threonyl-[protein] + H2O = L-threonyl-[protein] + phosphate. The chain is Probable protein phosphatase 2C 52 from Arabidopsis thaliana (Mouse-ear cress).